Reading from the N-terminus, the 367-residue chain is Germination protease (367 aa).

The propeptide occupies Met1 to Asp15.

It belongs to the peptidase A25 family. As to quaternary structure, homotetramer. In terms of processing, autoproteolytically processed. The inactive tetrameric zymogen termed p46 autoprocesses to a smaller form termed p41, which is active only during spore germination.

The enzyme catalyses Endopeptidase action with P4 Glu or Asp, P1 preferably Glu &gt; Asp, P1' hydrophobic and P2' Ala.. In terms of biological role, initiates the rapid degradation of small, acid-soluble proteins during spore germination. The chain is Germination protease from Bacillus cytotoxicus (strain DSM 22905 / CIP 110041 / 391-98 / NVH 391-98).